We begin with the raw amino-acid sequence, 1779 residues long: 5-methyl-1-naphthoate synthase (1779 aa).

In terms of domain architecture, Ketosynthase family 3 (KS3) spans 10-433; the sequence is VEPLAVIGMS…GSIAHAVLQQ (424 aa). Residues cysteine 181, histidine 316, and histidine 356 each act as for beta-ketoacyl synthase activity in the active site. The tract at residues 902 to 1027 is N-terminal hotdog fold; the sequence is HTLIGARTTV…ATVVHEPEVG (126 aa). The region spanning 902–1180 is the PKS/mFAS DH domain; sequence HTLIGARTTV…YVKVQDIGSG (279 aa). The interval 1042–1180 is C-terminal hotdog fold; it reads PVSWTWAKVD…YVKVQDIGSG (139 aa). The Carrier domain maps to 1664–1742; it reads GELPELVLKV…ALAEFLAAEV (79 aa). An O-(pantetheine 4'-phosphoryl)serine modification is found at serine 1702. A disordered region spans residues 1746 to 1771; that stretch reads TADAEETDPVAGLPAPQQGSGTAEQL.

It carries out the reaction 5 malonyl-CoA + acetyl-CoA + 3 NADPH + 7 H(+) = 5-methyl-1-naphthoate + 5 CO2 + 3 NADP(+) + 6 CoA + 4 H2O. The protein operates within antibiotic biosynthesis. Polyketide synthase that catalyzes the biosynthesis of the bicyclic aromatic compound 5-methyl-1-naphthoate in the biosynthesis of the antitumor antibiotic azinomycin B. The chain is 5-methyl-1-naphthoate synthase from Streptomyces sahachiroi.